Here is a 276-residue protein sequence, read N- to C-terminus: 2-dehydro-3-deoxyphosphooctonate aldolase (276 aa).

Belongs to the KdsA family.

The protein resides in the cytoplasm. It catalyses the reaction D-arabinose 5-phosphate + phosphoenolpyruvate + H2O = 3-deoxy-alpha-D-manno-2-octulosonate-8-phosphate + phosphate. The protein operates within carbohydrate biosynthesis; 3-deoxy-D-manno-octulosonate biosynthesis; 3-deoxy-D-manno-octulosonate from D-ribulose 5-phosphate: step 2/3. Its pathway is bacterial outer membrane biogenesis; lipopolysaccharide biosynthesis. This is 2-dehydro-3-deoxyphosphooctonate aldolase from Helicobacter pylori (strain Shi470).